A 116-amino-acid chain; its full sequence is Beta-D-galactosidase Rv1717 (116 aa).

Positions 40-107 constitute a Cupin type-2 domain; that stretch reads LSVYRPGGTA…TDRQALLLVT (68 aa).

The protein resides in the secreted. Its subcellular location is the cell wall. It carries out the reaction Hydrolysis of terminal non-reducing beta-D-galactose residues in beta-D-galactosides.. Beta-galactosidase activity is activated by Mg(2+) and significantly inhibited by Ca(2+), Cd(2+), Fe(2+), Ni(2+), Cu(2+) and Zn(2+). Inhibited by EDTA. In terms of biological role, beta-D-galactopyranosidase that specifically recognizes the beta-glycosidic bonds formed with beta-D-galactopyranose (beta-D-Gal) or N-acetylgalactosamine (beta-D-GalNAc). May target the galactoside linkages in the exopolysaccharide component of the mycobacterial extracellular polymeric substance (EPS) and help dispersal of Mtb bacteria from a deteriorating biofilm. In Mycobacterium tuberculosis (strain ATCC 25618 / H37Rv), this protein is Beta-D-galactosidase Rv1717.